The following is a 466-amino-acid chain: Neuronal acetylcholine receptor subunit non-alpha-3 (466 aa).

Positions 1 to 28 (MKLQISGLLLVTAVAYATIEAPEEFVSL) are cleaved as a signal peptide. The Extracellular segment spans residues 29-235 (AEMEDTLLRN…VTYSFILKRL (207 aa)). Residues Asn-54, Asn-141, Asn-169, and Asn-208 are each glycosylated (N-linked (GlcNAc...) asparagine). A disulfide bridge connects residues Cys-156 and Cys-170. The next 3 helical transmembrane spans lie at 236 to 260 (PLFYTLFLIIPCLGLSFLTVLVFYL), 268 to 285 (LLLSTSVLVSLTVFLLVI), and 302 to 323 (YLLFIMIFVTFSIIVTLFVINV). The Cytoplasmic segment spans residues 324–438 (HHRSSATYHP…WKFVAQVLDR (115 aa)). A helical transmembrane segment spans residues 439–456 (IFLWVFLTASVLGTILIF).

Belongs to the ligand-gated ion channel (TC 1.A.9) family. Acetylcholine receptor (TC 1.A.9.1) subfamily. Neuronal AChR seems to be composed of two different type of subunits: alpha and non-alpha (beta). As to expression, retina, tectum and brain.

It is found in the postsynaptic cell membrane. Its subcellular location is the cell membrane. After binding acetylcholine, the AChR responds by an extensive change in conformation that affects all subunits and leads to opening of an ion-conducting channel across the plasma membrane. This is Neuronal acetylcholine receptor subunit non-alpha-3 from Carassius auratus (Goldfish).